The sequence spans 786 residues: Endonuclease MutS2 (786 aa).

335–342 (GPNTGGKT) is a binding site for ATP. One can recognise a Smr domain in the interval 711-786 (LDLRGERFEN…GLGVTVVELK (76 aa)).

Belongs to the DNA mismatch repair MutS family. MutS2 subfamily. In terms of assembly, homodimer. Binds to stalled ribosomes, contacting rRNA.

Functionally, endonuclease that is involved in the suppression of homologous recombination and thus may have a key role in the control of bacterial genetic diversity. Its function is as follows. Acts as a ribosome collision sensor, splitting the ribosome into its 2 subunits. Detects stalled/collided 70S ribosomes which it binds and splits by an ATP-hydrolysis driven conformational change. Acts upstream of the ribosome quality control system (RQC), a ribosome-associated complex that mediates the extraction of incompletely synthesized nascent chains from stalled ribosomes and their subsequent degradation. Probably generates substrates for RQC. This is Endonuclease MutS2 from Bacillus cytotoxicus (strain DSM 22905 / CIP 110041 / 391-98 / NVH 391-98).